The sequence spans 190 residues: Elongation factor P (190 aa).

Belongs to the elongation factor P family.

Its subcellular location is the cytoplasm. The protein operates within protein biosynthesis; polypeptide chain elongation. Functionally, involved in peptide bond synthesis. Stimulates efficient translation and peptide-bond synthesis on native or reconstituted 70S ribosomes in vitro. Probably functions indirectly by altering the affinity of the ribosome for aminoacyl-tRNA, thus increasing their reactivity as acceptors for peptidyl transferase. The sequence is that of Elongation factor P (efp) from Mycoplasma genitalium (strain ATCC 33530 / DSM 19775 / NCTC 10195 / G37) (Mycoplasmoides genitalium).